Consider the following 357-residue polypeptide: MVRLTVDLIAKNSNLKPRKEETLAQCLKKITHINFSDRNIDSIDDLSLCRNLSVLYLYDNRISQVTNLNYTTNLTHLYLQNNCISCIENLSSLKKLEKLYLGGNYIAVIEGLEGLEELRELHVESQRLPLGEKLLFDPRTLRSLAKSLSTLNISNNNIDDIKDLEILENLNHLIAVDNQLMHVKDLELLLKKLMKLWKMDLNGNPVCLKPKYRDKLILTSKSLEFLDGKEIKDMERQFLMNWKASKDAKKISKKRRSRSEDASNSYISNFETVHHIVPVYYPQVGKPKVIFFSDVQRYLVHGNASSKCSQEDKTTITEDIGNLSLKESESSLTKNDIHEPHLLQNPKVKENLSEKKE.

LRR repeat units lie at residues 29-50 (KITHINFSDRNIDSIDDLSLCR), 51-72 (NLSVLYLYDNRISQVTNLNYTT), 73-94 (NLTHLYLQNNCISCIENLSSLK), 95-116 (KLEKLYLGGNYIAVIEGLEGLE), 117-138 (ELRELHVESQRLPLGEKLLFDP), 147-168 (SLSTLNISNNNIDDIKDLEILE), and 169-190 (NLNHLIAVDNQLMHVKDLELLL). Positions 204 to 242 (NPVCLKPKYRDKLILTSKSLEFLDGKEIKDMERQFLMNW) constitute an LRRCT domain. A disordered region spans residues 329-357 (ESSLTKNDIHEPHLLQNPKVKENLSEKKE). Over residues 335 to 357 (NDIHEPHLLQNPKVKENLSEKKE) the composition is skewed to basic and acidic residues.

In terms of assembly, interacts with PPP1CC isoform gamma-2; the interaction is direct. Interacts with actin, dynein, KIF5B, KIFC1 and tubulin. Associates with microtubules. Post-translationally, phosphorylated; during the first round of spermatogenesis with a marginal increase at 21 days after birth. In terms of tissue distribution, testis-specific. Expressed in spermatids (at protein level). Testis-specific.

The protein resides in the cytoplasm. It is found in the cytoskeleton. Its subcellular location is the microtubule organizing center. It localises to the centrosome. In terms of biological role, regulates phosphatase activity of protein phosphatase 1 (PP1) complexes in the testis. The chain is Protein phosphatase 1 regulatory subunit 42 (Ppp1r42) from Mus musculus (Mouse).